A 371-amino-acid chain; its full sequence is Zygote-specific protein 3 (371 aa).

An N-terminal signal peptide occupies residues 1–24; that stretch reads MLRSAGRVAAVALLALFALGCVSA. Asn-41 is a glycosylation site (N-linked (GlcNAc...) asparagine). ANK repeat units follow at residues 62–91 and 94–123; these read TRRL…LARV and GTTT…DPNA. WW domains follow at residues 159–187 and 283–313; these read EPGA…WAVP and YATP…WELP.

It is found in the endoplasmic reticulum lumen. Functionally, may have a role in the remodeling of the endoplasmic reticulum upon zygote formation. This chain is Zygote-specific protein 3 (ZYS3), found in Chlamydomonas reinhardtii (Chlamydomonas smithii).